Consider the following 117-residue polypeptide: Large ribosomal subunit protein eL34 (117 aa).

Belongs to the eukaryotic ribosomal protein eL34 family. In terms of assembly, component of the large ribosomal subunit.

It is found in the cytoplasm. The protein resides in the cytosol. It localises to the endoplasmic reticulum. Functionally, component of the large ribosomal subunit. The ribosome is a large ribonucleoprotein complex responsible for the synthesis of proteins in the cell. The protein is Large ribosomal subunit protein eL34 (rpl34) of Ictalurus punctatus (Channel catfish).